Reading from the N-terminus, the 67-residue chain is MPKMKTKSSAKKRFRVRPGGTVKRGQAFKRHILTKKTTKNKRHLRGAVSVHETNMGHMAQMLPFAGL.

A compositionally biased stretch (basic residues) spans 1–16; the sequence is MPKMKTKSSAKKRFRV. The disordered stretch occupies residues 1–24; it reads MPKMKTKSSAKKRFRVRPGGTVKR.

Belongs to the bacterial ribosomal protein bL35 family.

This chain is Large ribosomal subunit protein bL35, found in Paracidovorax citrulli (strain AAC00-1) (Acidovorax citrulli).